We begin with the raw amino-acid sequence, 300 residues long: Putative glycosyltransferase ORF300 (300 aa).

This sequence belongs to the glycosyltransferase group 1 family. Glycosyltransferase 4 subfamily.

This chain is Putative glycosyltransferase ORF300, found in Acidianus hospitalis (AFV-1).